A 2197-amino-acid chain; its full sequence is uncharacterized protein (2197 aa).

Serine 2 carries the post-translational modification N-acetylserine. The HEAT repeat unit spans residues 2159–2195; sequence TIPFLAELLEDVELSVKSLAQDIIKQMEEMSGESLAE.

The protein belongs to the HEATR1/UTP10 family.

The protein resides in the nucleus. The protein localises to the nucleolus. In terms of biological role, involved in nucleolar processing of pre-18S ribosomal RNA. Involved in ribosome biosynthesis. This is an uncharacterized protein from Arabidopsis thaliana (Mouse-ear cress).